The chain runs to 85 residues: Elongation factor 1-beta (85 aa).

Belongs to the EF-1-beta/EF-1-delta family.

Functionally, promotes the exchange of GDP for GTP in EF-1-alpha/GDP, thus allowing the regeneration of EF-1-alpha/GTP that could then be used to form the ternary complex EF-1-alpha/GTP/AAtRNA. This chain is Elongation factor 1-beta, found in Methanospirillum hungatei JF-1 (strain ATCC 27890 / DSM 864 / NBRC 100397 / JF-1).